A 334-amino-acid chain; its full sequence is BTB and MATH domain-containing protein 39 (334 aa).

The MATH domain occupies 14–141; sequence IVTLVFNIYN…EGRFQIEFDL (128 aa). One can recognise a BTB domain in the interval 164–229; that stretch reads ADGELITDGK…LQLDSFEVSV (66 aa).

This is BTB and MATH domain-containing protein 39 (bath-39) from Caenorhabditis elegans.